Reading from the N-terminus, the 546-residue chain is 5'-nucleotidase domain-containing protein 3 (546 aa).

Aspartate 100 serves as the catalytic Nucleophile. Aspartate 100 and aspartate 102 together coordinate Mg(2+). Catalysis depends on aspartate 102, which acts as the Proton donor. Residue 249–257 (KDSIRDVHI) participates in substrate binding. Residue aspartate 387 coordinates Mg(2+).

This sequence belongs to the 5'(3')-deoxyribonucleotidase family. Requires Mg(2+) as cofactor.

The polypeptide is 5'-nucleotidase domain-containing protein 3 (Nt5dc3) (Mus musculus (Mouse)).